The primary structure comprises 97 residues: YcgL domain-containing protein Pmen_1774 (97 aa).

Residues 3–87 enclose the YcgL domain; that stretch reads RICSIYKSPR…PEEDYIQHLP (85 aa).

This Ectopseudomonas mendocina (strain ymp) (Pseudomonas mendocina) protein is YcgL domain-containing protein Pmen_1774.